The primary structure comprises 92 residues: Small ribosomal subunit protein uS19 (92 aa).

It belongs to the universal ribosomal protein uS19 family.

Protein S19 forms a complex with S13 that binds strongly to the 16S ribosomal RNA. The chain is Small ribosomal subunit protein uS19 from Staphylococcus aureus (strain Mu3 / ATCC 700698).